Consider the following 312-residue polypeptide: Glyoxylate/hydroxypyruvate reductase A (312 aa).

Residue R227 is part of the active site. H275 functions as the Proton donor in the catalytic mechanism.

The protein belongs to the D-isomer specific 2-hydroxyacid dehydrogenase family. GhrA subfamily.

Its subcellular location is the cytoplasm. It carries out the reaction glycolate + NADP(+) = glyoxylate + NADPH + H(+). It catalyses the reaction (R)-glycerate + NAD(+) = 3-hydroxypyruvate + NADH + H(+). The enzyme catalyses (R)-glycerate + NADP(+) = 3-hydroxypyruvate + NADPH + H(+). In terms of biological role, catalyzes the NADPH-dependent reduction of glyoxylate and hydroxypyruvate into glycolate and glycerate, respectively. In Escherichia coli (strain ATCC 8739 / DSM 1576 / NBRC 3972 / NCIMB 8545 / WDCM 00012 / Crooks), this protein is Glyoxylate/hydroxypyruvate reductase A.